The chain runs to 457 residues: Multidrug resistance protein MdtK (457 aa).

Transmembrane regions (helical) follow at residues 11-31 (LLALAIPVILAQIAQTAMGFV), 53-73 (IWLPAILFGHGLLLALTPVIA), 93-113 (WLAGCVSVLIMFVLWNAGYII), 127-147 (AVGYLRALLWGAPGYLFFQVA), 160-180 (GMVIGFLGLLVNIPVNYIFIY), 188-208 (LGGVGCGVATAAVYWVMFIAM), 243-263 (LPIALALFFEVTLFAVVALLV), 276-296 (IALNFSSLMFVLPMSLAAAVT), 314-334 (AARTGLGVGVCMAVITAIFTV), 357-377 (LMLLAAVYQISDSIQVIGSGI), 387-407 (IFFITFTAYWVLGLPSGYILA), and 418-438 (PAGFWMGFIIGLTSAAIMMML).

It belongs to the multi antimicrobial extrusion (MATE) (TC 2.A.66.1) family. MdtK subfamily.

It is found in the cell inner membrane. In terms of biological role, multidrug efflux pump that functions probably as a Na(+)/drug antiporter. This chain is Multidrug resistance protein MdtK, found in Citrobacter koseri (strain ATCC BAA-895 / CDC 4225-83 / SGSC4696).